The primary structure comprises 551 residues: CTP synthase (551 aa).

The amidoligase domain stretch occupies residues 1–267 (MPKYVFVTGG…GRYVMEHLGW (267 aa)). Position 13 (Ser-13) interacts with CTP. Ser-13 provides a ligand contact to UTP. Residue 14–19 (SVGKGI) coordinates ATP. An L-glutamine-binding site is contributed by Tyr-54. Asp-71 is an ATP binding site. Residues Asp-71 and Glu-141 each contribute to the Mg(2+) site. CTP contacts are provided by residues 148–150 (DIE), 188–193 (KTKPTQ), and Lys-224. UTP is bound by residues 188–193 (KTKPTQ) and Lys-224. The Glutamine amidotransferase type-1 domain occupies 292–532 (RIALVGKYVE…IGVAKHVLRE (241 aa)). An L-glutamine-binding site is contributed by Gly-353. The Nucleophile; for glutamine hydrolysis role is filled by Cys-380. L-glutamine is bound by residues 381–384 (YGLH), Glu-404, and Arg-460. Catalysis depends on residues His-505 and Glu-507.

This sequence belongs to the CTP synthase family. Homotetramer.

It catalyses the reaction UTP + L-glutamine + ATP + H2O = CTP + L-glutamate + ADP + phosphate + 2 H(+). The enzyme catalyses L-glutamine + H2O = L-glutamate + NH4(+). The catalysed reaction is UTP + NH4(+) + ATP = CTP + ADP + phosphate + 2 H(+). It participates in pyrimidine metabolism; CTP biosynthesis via de novo pathway; CTP from UDP: step 2/2. Allosterically activated by GTP, when glutamine is the substrate; GTP has no effect on the reaction when ammonia is the substrate. The allosteric effector GTP functions by stabilizing the protein conformation that binds the tetrahedral intermediate(s) formed during glutamine hydrolysis. Inhibited by the product CTP, via allosteric rather than competitive inhibition. Its function is as follows. Catalyzes the ATP-dependent amination of UTP to CTP with either L-glutamine or ammonia as the source of nitrogen. Regulates intracellular CTP levels through interactions with the four ribonucleotide triphosphates. This chain is CTP synthase, found in Thermomicrobium roseum (strain ATCC 27502 / DSM 5159 / P-2).